Consider the following 604-residue polypeptide: 3-hydroxy-3-methylglutaryl-coenzyme A reductase (604 aa).

A disordered region spans residues 1 to 31 (MDVRRRSEKPAYPTKEFAAGEKPLKPHKQQQ). Helical transmembrane passes span 40-62 (ASDA…FFSV) and 90-110 (AIAS…IGFV). The linker stretch occupies residues 111 to 189 (QSFVSRDNND…PLVTPAASEE (79 aa)). Residues 190–604 (DEEIIKSVVQ…STKDVTKASS (415 aa)) are catalytic. The active-site Charge relay system is the E283. N-linked (GlcNAc...) asparagine glycosylation occurs at N347. K415 functions as the Charge relay system in the catalytic mechanism. The N-linked (GlcNAc...) asparagine glycan is linked to N460. The active-site Charge relay system is the D491. The active-site Proton donor is the H589. N-linked (GlcNAc...) asparagine glycosylation is present at N593.

Belongs to the HMG-CoA reductase family. In terms of tissue distribution, found in protoplasts and leaves submitted to stress. Low levels found in apexes, anthers and roots.

The protein localises to the endoplasmic reticulum membrane. The catalysed reaction is (R)-mevalonate + 2 NADP(+) + CoA = (3S)-3-hydroxy-3-methylglutaryl-CoA + 2 NADPH + 2 H(+). The protein operates within metabolic intermediate biosynthesis; (R)-mevalonate biosynthesis; (R)-mevalonate from acetyl-CoA: step 3/3. Functionally, catalyzes the synthesis of mevalonate, the specific precursor of all isoprenoid compounds present in plants. Possible role in plant defense mechanisms as well as in the cell cycle. This Nicotiana sylvestris (Wood tobacco) protein is 3-hydroxy-3-methylglutaryl-coenzyme A reductase (HMGR).